Consider the following 179-residue polypeptide: 6,7-dimethyl-8-ribityllumazine synthase (179 aa).

5-amino-6-(D-ribitylamino)uracil-binding positions include Trp13, 45–47, and 68–70; these read AVE and VVI. 73–74 is a (2S)-2-hydroxy-3-oxobutyl phosphate binding site; it reads DT. His76 (proton donor) is an active-site residue. Phe101 provides a ligand contact to 5-amino-6-(D-ribitylamino)uracil. Arg115 is a binding site for (2S)-2-hydroxy-3-oxobutyl phosphate. The disordered stretch occupies residues 157–179; sequence AKAAKKPAKAAAKTQKKKKKVRK.

Belongs to the DMRL synthase family.

It catalyses the reaction (2S)-2-hydroxy-3-oxobutyl phosphate + 5-amino-6-(D-ribitylamino)uracil = 6,7-dimethyl-8-(1-D-ribityl)lumazine + phosphate + 2 H2O + H(+). It participates in cofactor biosynthesis; riboflavin biosynthesis; riboflavin from 2-hydroxy-3-oxobutyl phosphate and 5-amino-6-(D-ribitylamino)uracil: step 1/2. Its function is as follows. Catalyzes the formation of 6,7-dimethyl-8-ribityllumazine by condensation of 5-amino-6-(D-ribitylamino)uracil with 3,4-dihydroxy-2-butanone 4-phosphate. This is the penultimate step in the biosynthesis of riboflavin. The polypeptide is 6,7-dimethyl-8-ribityllumazine synthase (Bdellovibrio bacteriovorus (strain ATCC 15356 / DSM 50701 / NCIMB 9529 / HD100)).